We begin with the raw amino-acid sequence, 256 residues long: Isoprenyl transferase (256 aa).

The active site involves aspartate 33. Aspartate 33 lines the Mg(2+) pocket. Substrate contacts are provided by residues glycine 34–arginine 37, tryptophan 38, arginine 46, histidine 50, and serine 78–glutamate 80. Asparagine 81 (proton acceptor) is an active-site residue. Substrate-binding positions include tryptophan 82, arginine 84, arginine 201, and arginine 207–serine 209. Glutamate 220 lines the Mg(2+) pocket.

This sequence belongs to the UPP synthase family. In terms of assembly, homodimer. Mg(2+) serves as cofactor.

Catalyzes the condensation of isopentenyl diphosphate (IPP) with allylic pyrophosphates generating different type of terpenoids. This Staphylococcus haemolyticus (strain JCSC1435) protein is Isoprenyl transferase.